The chain runs to 1001 residues: Serine/threonine-protein kinase TAO1-A (1001 aa).

A Protein kinase domain is found at 28–281 (FSDLREIGHG…SDELLKNMFV (254 aa)). ATP is bound by residues 34–42 (IGHGSFGAV) and Lys57. The active-site Proton acceptor is Asp151. Disordered stretches follow at residues 324–431 (PAVE…HKSH) and 567–586 (KEELNENQSTPKKEKQEWLS). Residues 350–370 (SNQSIPSMSISASSQSSSVTS) show a composition bias toward low complexity. Basic and acidic residues-rich tracts occupy residues 375–388 (SDDKSELDMMEGDH) and 577–586 (PKKEKQEWLS). Coiled coils occupy residues 458–651 (SELR…EHAM) and 754–877 (KAVL…EIEA). Residues 911-1001 (SHNPTGGPGP…ISNGSRMSYT (91 aa)) are disordered. The span at 921 to 930 (HWGHPMAGPP) shows a compositional bias: low complexity. Polar residues-rich tracts occupy residues 949–967 (GSVQGVSRGSTMGVRNSPQ) and 974–1001 (SGGQTEQGMSRSTSVTSQISNGSRMSYT).

It belongs to the protein kinase superfamily. STE Ser/Thr protein kinase family. STE20 subfamily.

The protein localises to the cytoplasm. It catalyses the reaction L-seryl-[protein] + ATP = O-phospho-L-seryl-[protein] + ADP + H(+). The enzyme catalyses L-threonyl-[protein] + ATP = O-phospho-L-threonyl-[protein] + ADP + H(+). Its function is as follows. Serine/threonine-protein kinase involved in various processes such as p38/mapk14 stress-activated MAPK cascade, DNA damage response and regulation of cytoskeleton stability. Acts as an activator of the p38/MAPK14 stress-activated MAPK cascade by mediating phosphorylation and subsequent activation of upstream MAP kinase kinases. In response to DNA damage, involved in the G2/M transition DNA damage checkpoint by activating the p38/MAPK14 stress-activated MAPK cascade. This chain is Serine/threonine-protein kinase TAO1-A (taok1-a), found in Xenopus laevis (African clawed frog).